We begin with the raw amino-acid sequence, 203 residues long: FMN-dependent NADH:quinone oxidoreductase (203 aa).

Residues Ser-9, 15 to 17 (SVS), and 139 to 142 (TRGG) each bind FMN.

The protein belongs to the azoreductase type 1 family. In terms of assembly, homodimer. FMN is required as a cofactor.

The enzyme catalyses 2 a quinone + NADH + H(+) = 2 a 1,4-benzosemiquinone + NAD(+). It catalyses the reaction N,N-dimethyl-1,4-phenylenediamine + anthranilate + 2 NAD(+) = 2-(4-dimethylaminophenyl)diazenylbenzoate + 2 NADH + 2 H(+). In terms of biological role, quinone reductase that provides resistance to thiol-specific stress caused by electrophilic quinones. Its function is as follows. Also exhibits azoreductase activity. Catalyzes the reductive cleavage of the azo bond in aromatic azo compounds to the corresponding amines. The protein is FMN-dependent NADH:quinone oxidoreductase of Albidiferax ferrireducens (strain ATCC BAA-621 / DSM 15236 / T118) (Rhodoferax ferrireducens).